A 103-amino-acid chain; its full sequence is Large ribosomal subunit protein bL21 (103 aa).

Belongs to the bacterial ribosomal protein bL21 family. As to quaternary structure, part of the 50S ribosomal subunit. Contacts protein L20.

Its function is as follows. This protein binds to 23S rRNA in the presence of protein L20. The polypeptide is Large ribosomal subunit protein bL21 (Nocardia farcinica (strain IFM 10152)).